The following is a 283-amino-acid chain: Protein BASIC PENTACYSTEINE1 (283 aa).

The segment at 111–170 (RFEENPIPPPAPCEEQTGKKRKMRGSIATPTVPKAKKMRKPKEERDVTNNNVQQQQQRVK) is disordered. Low complexity predominate over residues 158 to 169 (TNNNVQQQQQRV).

Belongs to the BBR/BPC family. In terms of tissue distribution, expressed in seedlings, leaves and pistils. Detected in the base of flowers and tips of carpels, in leaf and sepal vasculature, in young rosette, in the lateral and tip of primary roots, and in the whole ovule.

Its subcellular location is the nucleus. In terms of biological role, transcriptional regulator that specifically binds to GA-rich elements (GAGA-repeats) present in regulatory sequences of genes involved in developmental processes. Negatively regulates the homeotic gene AGL11/STK, which controls ovule primordium identity, by a cooperative binding to purine-rich elements present in the regulatory sequence leading to DNA conformational changes. This Arabidopsis thaliana (Mouse-ear cress) protein is Protein BASIC PENTACYSTEINE1 (BPC1).